The sequence spans 793 residues: Probable serine/threonine-protein kinase fnkA (793 aa).

The Protein kinase domain occupies 11–358 (WEILSQLGTG…IINLISHNFI (348 aa)). Residues 17 to 25 (LGTGAFGRV) and lysine 46 contribute to the ATP site. Catalysis depends on aspartate 138, which acts as the Proton acceptor. FNIP repeat units lie at residues 403 to 444 (FNQT…FGAR), 470 to 514 (YNQP…ILGD), 515 to 557 (YDQK…LGYR), 558 to 601 (FNKA…LGYC), and 691 to 733 (FIRP…LGSR).

It belongs to the protein kinase superfamily. STE Ser/Thr protein kinase family. Mg(2+) serves as cofactor.

It catalyses the reaction L-seryl-[protein] + ATP = O-phospho-L-seryl-[protein] + ADP + H(+). The enzyme catalyses L-threonyl-[protein] + ATP = O-phospho-L-threonyl-[protein] + ADP + H(+). The chain is Probable serine/threonine-protein kinase fnkA from Dictyostelium discoideum (Social amoeba).